The sequence spans 336 residues: MLVLGIETSCDETSAAIVEDGRKILSNVIYSQIDIHYQFGGVVPEIASRKHVEKISYVVDMAFKQAGLTIDDIDGIAATYGPGLVGSLLVGLSFAKALSYAKRLPFVAVNHIEGHIYANFITYPQLTPPLIVLVVSGGHTNLIILKDFEEYEVVGKTRDDAAGEAFDKIARYLGLGYPGGPAIDKIAKQGDEDKYKYPVADVGGYNFSFSGLKSAVINHVHGLWQRGEEFKIEDVAASFQKTVVSILVEKTINLSLETNIRKIAVAGGVAANSKLRSEFYKKCAEHNIEFFVPEFKYCTDNAAMIASCGYFKLQKGIVSSYRENAVPYINLVSKKS.

2 residues coordinate Fe cation: H111 and H115. Substrate contacts are provided by residues 134–138 (VVSGG), D167, G180, D184, and N272. D300 provides a ligand contact to Fe cation.

This sequence belongs to the KAE1 / TsaD family. Fe(2+) is required as a cofactor.

It is found in the cytoplasm. The enzyme catalyses L-threonylcarbamoyladenylate + adenosine(37) in tRNA = N(6)-L-threonylcarbamoyladenosine(37) in tRNA + AMP + H(+). In terms of biological role, required for the formation of a threonylcarbamoyl group on adenosine at position 37 (t(6)A37) in tRNAs that read codons beginning with adenine. Is involved in the transfer of the threonylcarbamoyl moiety of threonylcarbamoyl-AMP (TC-AMP) to the N6 group of A37, together with TsaE and TsaB. TsaD likely plays a direct catalytic role in this reaction. This Caldicellulosiruptor bescii (strain ATCC BAA-1888 / DSM 6725 / KCTC 15123 / Z-1320) (Anaerocellum thermophilum) protein is tRNA N6-adenosine threonylcarbamoyltransferase.